The following is a 333-amino-acid chain: Pro-cathepsin H (333 aa).

The signal sequence occupies residues 1-20 (MWAALPLLCAGAWLLSTGAT). A propeptide spans 21–95 (AELTVNAIEK…AEIKHKFLWS (75 aa)) (activation peptide). N-linked (GlcNAc...) asparagine glycans are attached at residues Asn-70 and Asn-99. 4 disulfides stabilise this stretch: Cys-100/Cys-325, Cys-136/Cys-179, Cys-170/Cys-212, and Cys-270/Cys-320. A propeptide spanning residues 104–113 (KSNYLRGTGP) is cleaved from the precursor. The active site involves Cys-139. N-linked (GlcNAc...) asparagine glycosylation occurs at Asn-228. Active-site residues include His-279 and Asn-299.

This sequence belongs to the peptidase C1 family. In terms of assembly, composed of a mini chain and a large chain. The large chain may be split into heavy and light chain. All chains are held together by disulfide bonds. Widely expressed with highest expression found in non-skeletal tissues. Low levels found in skeletal tissue.

The protein resides in the lysosome. The catalysed reaction is Hydrolysis of proteins, acting as an aminopeptidase (notably, cleaving Arg-|-Xaa bonds) as well as an endopeptidase.. Its function is as follows. Important for the overall degradation of proteins in lysosomes. This is Pro-cathepsin H (Ctsh) from Mus musculus (Mouse).